We begin with the raw amino-acid sequence, 366 residues long: UDP-N-acetylglucosamine--N-acetylmuramyl-(pentapeptide) pyrophosphoryl-undecaprenol N-acetylglucosamine transferase (366 aa).

UDP-N-acetyl-alpha-D-glucosamine contacts are provided by residues 14–16 (TGG), asparagine 125, arginine 168, serine 196, and glutamine 297.

It belongs to the glycosyltransferase 28 family. MurG subfamily.

The protein resides in the cell inner membrane. It catalyses the reaction di-trans,octa-cis-undecaprenyl diphospho-N-acetyl-alpha-D-muramoyl-L-alanyl-D-glutamyl-meso-2,6-diaminopimeloyl-D-alanyl-D-alanine + UDP-N-acetyl-alpha-D-glucosamine = di-trans,octa-cis-undecaprenyl diphospho-[N-acetyl-alpha-D-glucosaminyl-(1-&gt;4)]-N-acetyl-alpha-D-muramoyl-L-alanyl-D-glutamyl-meso-2,6-diaminopimeloyl-D-alanyl-D-alanine + UDP + H(+). It participates in cell wall biogenesis; peptidoglycan biosynthesis. Functionally, cell wall formation. Catalyzes the transfer of a GlcNAc subunit on undecaprenyl-pyrophosphoryl-MurNAc-pentapeptide (lipid intermediate I) to form undecaprenyl-pyrophosphoryl-MurNAc-(pentapeptide)GlcNAc (lipid intermediate II). The sequence is that of UDP-N-acetylglucosamine--N-acetylmuramyl-(pentapeptide) pyrophosphoryl-undecaprenol N-acetylglucosamine transferase from Rhodopseudomonas palustris (strain BisB5).